Consider the following 459-residue polypeptide: Argininosuccinate lyase (459 aa).

The protein belongs to the lyase 1 family. Argininosuccinate lyase subfamily.

It localises to the cytoplasm. It catalyses the reaction 2-(N(omega)-L-arginino)succinate = fumarate + L-arginine. It functions in the pathway amino-acid biosynthesis; L-arginine biosynthesis; L-arginine from L-ornithine and carbamoyl phosphate: step 3/3. The polypeptide is Argininosuccinate lyase (Prochlorococcus marinus (strain MIT 9301)).